The sequence spans 770 residues: Amyloid-beta precursor protein (770 aa).

A signal peptide spans Met1–Ala17. Residues Leu18–Ala701 lie on the Extracellular side of the membrane. The interval Leu28–Val123 is GFLD subdomain. Residues Leu28–Leu189 form the E1 domain. 6 cysteine pairs are disulfide-bonded: Cys38-Cys62, Cys73-Cys117, Cys98-Cys105, Cys133-Cys187, Cys144-Cys174, and Cys158-Cys186. Asn96–His110 contacts heparin. The tract at residues Asp131–Leu189 is cuBD subdomain. Residues His147, His151, and Tyr168 each coordinate Cu(2+). Residues Gly181–Pro188 are zinc-binding. Zn(2+)-binding residues include Glu183, Cys186, and Cys187. Residues Asp194 to Asp207 show a composition bias toward acidic residues. The tract at residues Asp194–Glu284 is disordered. Ser198 is modified (phosphoserine; by CK2). Ser206 bears the Phosphoserine; by CK1 mark. 2 positions are modified to sulfotyrosine: Tyr217 and Tyr262. The span at Val228–Glu264 shows a compositional bias: acidic residues. Over residues Arg268 to Glu281 the composition is skewed to low complexity. 3 cysteine pairs are disulfide-bonded: Cys291–Cys341, Cys300–Cys324, and Cys316–Cys337. The BPTI/Kunitz inhibitor domain occupies Cys291–Cys341. The residue at position 336 (Tyr336) is a Sulfotyrosine. The short motif at Val344 to Pro365 is the OX-2 element. Residues Ala374–Leu565 enclose the E2 domain. Positions Phe391–Leu423 are heparin-binding. Ser441 carries the phosphoserine modification. The interval Phe491–Lys522 is heparin-binding. Phosphotyrosine is present on Tyr497. Residues Ala523–Arg540 form a collagen-binding region. 2 N-linked (GlcNAc...) asparagine glycosylation sites follow: Asn542 and Asn571. His677, Tyr681, His684, and His685 together coordinate Cu(2+). The Zn(2+) site is built by His677, Tyr681, His684, and His685. Positions Val695–Met722 are interaction with PSEN1. A helical membrane pass occupies residues Ile702–Met722. Over Leu723–Asn770 the chain is Cytoplasmic. Positions Lys724 to Gly734 match the Basolateral sorting signal motif. Thr729 bears the Phosphothreonine mark. Phosphoserine; by APP-kinase I is present on Ser730. The interaction with G(o)-alpha stretch occupies residues His732 to Lys751. A Phosphothreonine; by CDK5 and MAPK10 modification is found at Thr743. The interval Gly756 to Asn770 is required for the interaction with KIF5B and for anterograde transport in axons. Tyr757 carries the post-translational modification Phosphotyrosine; by ABL1. The short motif at Tyr757–Tyr762 is the YENPXY motif; contains endocytosis signal element. A Glycyl lysine isopeptide (Lys-Gly) (interchain with G-Cter in ubiquitin) cross-link involves residue Lys763.

The protein belongs to the APP family. As to quaternary structure, binds, via its C-terminus, to the PID domain of several cytoplasmic proteins, including APBB family members, the APBA family, MAPK8IP1, SHC1 and NUMB and DAB1. Binding to DAB1 inhibits its serine phosphorylation. Interacts (via NPXY motif) with DAB2 (via PID domain); the interaction is impaired by tyrosine phosphorylation of the NPXY motif. Also interacts with GPCR-like protein BPP, APPBP1, IB1, KNS2 (via its TPR domains), APPBP2 (via BaSS) and DDB1. In vitro, it binds MAPT via the MT-binding domains. Associates with microtubules in the presence of ATP and in a kinesin-dependent manner. Interacts, through a C-terminal domain, with GNAO1. Amyloid-beta protein 42 binds CHRNA7 in hippocampal neurons. Amyloid-beta associates with HADH2. Interacts with CPEB1, ANKS1B and AGER. Interacts with ITM2B. Interacts with ITM2C. Interacts with IDE. Can form homodimers; dimerization is enhanced in the presence of Cu(2+) ions. Can form homodimers; this is promoted by heparin binding. Amyloid-beta protein 40 interacts with S100A9. CTF-alpha product of APP interacts with GSAP. Isoform APP695 interacts with SORL1 (via N-terminal ectodomain); this interaction retains APP in the trans-Golgi network and reduces processing into soluble APP-alpha and amyloid-beta peptides. Isoform APP770 interacts with SORL1. The C99 fragment also interacts with SORL1. Interacts with PLD3. Interacts with VDAC1. Interacts with NSG1; could regulate APP processing. Amyloid-beta protein 42 interacts with FPR2. Interacts (via transmembrane region) with PSEN1; the interaction is direct. Interacts with LRRK2. Interacts (via cytoplasmic domain) with KIF5B. Interacts (via C-terminus) with APBB2/FE65L1 (via C-terminus). Interacts (via intracellular domain) with APBB3. Post-translationally, proteolytically processed under normal cellular conditions. Cleavage either by alpha-secretase, beta-secretase or theta-secretase leads to generation and extracellular release of soluble APP peptides, S-APP-alpha and S-APP-beta, and the retention of corresponding membrane-anchored C-terminal fragments, C80, C83 and C99. Subsequent processing of C80 and C83 by gamma-secretase yields P3 peptides. This is the major secretory pathway and is non-amyloidogenic. Alternatively, presenilin/nicastrin-mediated gamma-secretase processing of C99 releases the amyloid-beta proteins, amyloid-beta protein 40 and amyloid-beta protein 42, major components of amyloid plaques, and the cytotoxic C-terminal fragments, gamma-CTF(50), gamma-CTF(57) and gamma-CTF(59). PSEN1 cleavage is more efficient with C83 than with C99 as substrate (in vitro). Amyloid-beta protein 40 and Amyloid-beta protein 42 are cleaved by ACE. Many other minor amyloid-beta peptides, amyloid-beta 1-X peptides, are found in cerebral spinal fluid (CSF) including the amyloid-beta X-15 peptides, produced from the cleavage by alpha-secretase. Proteolytically cleaved by caspases during neuronal apoptosis. Cleavage at Asp-739 by either caspase-3, -8 or -9 results in the production of the neurotoxic C31 peptide and the increased production of amyloid-beta peptides. In terms of processing, N- and O-glycosylated. Post-translationally, phosphorylation in the C-terminal on tyrosine, threonine and serine residues is neuron-specific. Phosphorylation can affect APP processing, neuronal differentiation and interaction with other proteins. Phosphorylated on Thr-743 in neuronal cells by Cdc5 kinase and Mapk10, in dividing cells by Cdc2 kinase in a cell-cycle dependent manner with maximal levels at the G2/M phase and, in vitro, by GSK-3-beta. The Thr-743 phosphorylated form causes a conformational change which reduces binding of Fe65 family members. In dopaminergic (DA) neurons, phosphorylation on Thr-743 by LRKK2 promotes the production and the nuclear translocation of the APP intracellular domain (AICD) which induces DA neuron apoptosis. Phosphorylation on Tyr-757 is required for SHC binding. Phosphorylated in the extracellular domain by casein kinases on both soluble and membrane-bound APP. This phosphorylation is inhibited by heparin. Trophic-factor deprivation triggers the cleavage of surface APP by beta-secretase to release sAPP-beta which is further cleaved to release an N-terminal fragment of APP (N-APP). In terms of processing, amyloid-beta peptides are degraded by IDE. Post-translationally, sulfated on tyrosine residues.

The protein localises to the cell membrane. Its subcellular location is the membrane. It is found in the perikaryon. It localises to the cell projection. The protein resides in the growth cone. The protein localises to the clathrin-coated pit. Its subcellular location is the early endosome. It is found in the cytoplasmic vesicle. It localises to the endoplasmic reticulum. The protein resides in the golgi apparatus. The protein localises to the secreted. Its subcellular location is the cell surface. It is found in the nucleus. It localises to the cytoplasm. Its function is as follows. Functions as a cell surface receptor and performs physiological functions on the surface of neurons relevant to neurite growth, neuronal adhesion and axonogenesis. Interaction between APP molecules on neighboring cells promotes synaptogenesis. Involved in cell mobility and transcription regulation through protein-protein interactions. Can promote transcription activation through binding to APBB1-KAT5 and inhibit Notch signaling through interaction with Numb. Couples to apoptosis-inducing pathways such as those mediated by G(o) and JIP. Inhibits G(o)-alpha ATPase activity. Acts as a kinesin I membrane receptor, mediating the axonal transport of beta-secretase and presenilin 1. By acting as a kinesin I membrane receptor, plays a role in axonal anterograde transport of cargo towards synapses in axons. May be involved in copper homeostasis/oxidative stress through copper ion reduction. In vitro, copper-metallated APP induces neuronal death directly or is potentiated through Cu(2+)-mediated low-density lipoprotein oxidation. Can regulate neurite outgrowth through binding to components of the extracellular matrix such as heparin and collagen I and IV. Induces a AGER-dependent pathway that involves activation of p38 MAPK, resulting in internalization of amyloid-beta peptide and mitochondrial dysfunction in cultured cortical neurons. Provides Cu(2+) ions for GPC1 which are required for release of nitric oxide (NO) and subsequent degradation of the heparan sulfate chains on GPC1. Amyloid-beta peptides are lipophilic metal chelators with metal-reducing activity. Binds transient metals such as copper, zinc and iron. Functionally, the gamma-CTF peptides as well as the caspase-cleaved peptides, including C31, are potent enhancers of neuronal apoptosis. This Macaca fascicularis (Crab-eating macaque) protein is Amyloid-beta precursor protein.